Consider the following 1188-residue polypeptide: DNA-directed RNA polymerase subunit beta (1188 aa).

The protein belongs to the RNA polymerase beta chain family. As to quaternary structure, the RNAP catalytic core consists of 2 alpha, 1 beta, 1 beta' and 1 omega subunit. When a sigma factor is associated with the core the holoenzyme is formed, which can initiate transcription.

The catalysed reaction is RNA(n) + a ribonucleoside 5'-triphosphate = RNA(n+1) + diphosphate. Its function is as follows. DNA-dependent RNA polymerase catalyzes the transcription of DNA into RNA using the four ribonucleoside triphosphates as substrates. In Streptococcus pyogenes serotype M1, this protein is DNA-directed RNA polymerase subunit beta.